The primary structure comprises 212 residues: Large ribosomal subunit protein uL3 (212 aa).

Residues 127–153 (FRGGPATHGQSDRHRAPGSIGSGTTPG) form a disordered region.

It belongs to the universal ribosomal protein uL3 family. In terms of assembly, part of the 50S ribosomal subunit. Forms a cluster with proteins L14 and L19.

Functionally, one of the primary rRNA binding proteins, it binds directly near the 3'-end of the 23S rRNA, where it nucleates assembly of the 50S subunit. The chain is Large ribosomal subunit protein uL3 from Herpetosiphon aurantiacus (strain ATCC 23779 / DSM 785 / 114-95).